Reading from the N-terminus, the 223-residue chain is Glutathione-specific gamma-glutamylcyclotransferase 1 (223 aa).

The interval 1–26 (MKQESASQSTPPPSLSPAPSSAQPSW) is disordered. Position 36–41 (36–41 (IFGYGS)) interacts with substrate. The active-site Proton acceptor is the Glu-116.

This sequence belongs to the gamma-glutamylcyclotransferase family. ChaC subfamily. As to quaternary structure, interacts with NOTCH1 (via extracellular region). As to expression, widely expressed, with high expression in forebrain and anterior spinal cord. Expressed at intermediate level in the dorsal aorta and heart. Present throughout adult brain (at protein level).

It is found in the cytoplasm. The protein resides in the cytosol. It localises to the golgi apparatus. Its subcellular location is the trans-Golgi network. It carries out the reaction glutathione = L-cysteinylglycine + 5-oxo-L-proline. Catalyzes the cleavage of glutathione into 5-oxo-L-proline and a Cys-Gly dipeptide. Acts specifically on glutathione, but not on other gamma-glutamyl peptides. Glutathione depletion is an important factor for apoptosis initiation and execution. Acts as a pro-apoptotic component of the unfolded protein response pathway by mediating the pro-apoptotic effects of the ATF4-ATF3-DDIT3/CHOP cascade. Negative regulator of Notch signaling pathway involved in embryonic neurogenesis: acts by inhibiting Notch cleavage by furin, maintaining Notch in an immature inactive form, thereby promoting neurogenesis in embryos. This Mus musculus (Mouse) protein is Glutathione-specific gamma-glutamylcyclotransferase 1.